The chain runs to 98 residues: Integration host factor subunit alpha (98 aa).

Over residues 53-69 the composition is skewed to basic and acidic residues; it reads DLREKSERPGRNPKTGE. A disordered region spans residues 53–73; it reads DLREKSERPGRNPKTGEDIPI.

This sequence belongs to the bacterial histone-like protein family. In terms of assembly, heterodimer of an alpha and a beta chain.

Its function is as follows. This protein is one of the two subunits of integration host factor, a specific DNA-binding protein that functions in genetic recombination as well as in transcriptional and translational control. The polypeptide is Integration host factor subunit alpha (Aliivibrio fischeri (strain ATCC 700601 / ES114) (Vibrio fischeri)).